Reading from the N-terminus, the 318-residue chain is Acetyl-coenzyme A carboxylase carboxyl transferase subunit alpha (318 aa).

The CoA carboxyltransferase C-terminal domain occupies 41–295 (RLTTKSQELT…KRQLIADLGS (255 aa)).

The protein belongs to the AccA family. Acetyl-CoA carboxylase is a heterohexamer composed of biotin carboxyl carrier protein (AccB), biotin carboxylase (AccC) and two subunits each of ACCase subunit alpha (AccA) and ACCase subunit beta (AccD).

It is found in the cytoplasm. The enzyme catalyses N(6)-carboxybiotinyl-L-lysyl-[protein] + acetyl-CoA = N(6)-biotinyl-L-lysyl-[protein] + malonyl-CoA. The protein operates within lipid metabolism; malonyl-CoA biosynthesis; malonyl-CoA from acetyl-CoA: step 1/1. Functionally, component of the acetyl coenzyme A carboxylase (ACC) complex. First, biotin carboxylase catalyzes the carboxylation of biotin on its carrier protein (BCCP) and then the CO(2) group is transferred by the carboxyltransferase to acetyl-CoA to form malonyl-CoA. In Idiomarina loihiensis (strain ATCC BAA-735 / DSM 15497 / L2-TR), this protein is Acetyl-coenzyme A carboxylase carboxyl transferase subunit alpha.